The primary structure comprises 404 residues: S-adenosylmethionine synthase (404 aa).

141–146 provides a ligand contact to ATP; that stretch reads GQGSVD.

This sequence belongs to the AdoMet synthase 2 family. It depends on Mg(2+) as a cofactor.

The catalysed reaction is L-methionine + ATP + H2O = S-adenosyl-L-methionine + phosphate + diphosphate. It functions in the pathway amino-acid biosynthesis; S-adenosyl-L-methionine biosynthesis; S-adenosyl-L-methionine from L-methionine: step 1/1. Its function is as follows. Catalyzes the formation of S-adenosylmethionine from methionine and ATP. The protein is S-adenosylmethionine synthase of Methanococcus vannielii (strain ATCC 35089 / DSM 1224 / JCM 13029 / OCM 148 / SB).